The primary structure comprises 342 residues: tRNA-specific 2-thiouridylase MnmA 2 (342 aa).

Cys-62 serves as the catalytic Nucleophile. Cysteines 62 and 160 form a disulfide. ATP is bound at residue Gly-86. An interaction with tRNA region spans residues 110-112; it reads KDQ. The Cysteine persulfide intermediate role is filled by Cys-160. The interaction with tRNA stretch occupies residues 268-269; that stretch reads RY.

The protein belongs to the MnmA/TRMU family.

Its subcellular location is the cytoplasm. It catalyses the reaction S-sulfanyl-L-cysteinyl-[protein] + uridine(34) in tRNA + AH2 + ATP = 2-thiouridine(34) in tRNA + L-cysteinyl-[protein] + A + AMP + diphosphate + H(+). In terms of biological role, catalyzes the 2-thiolation of uridine at the wobble position (U34) of tRNA, leading to the formation of s(2)U34. This is tRNA-specific 2-thiouridylase MnmA 2 from Syntrophus aciditrophicus (strain SB).